Reading from the N-terminus, the 2296-residue chain is Protein Ycf2 (2296 aa).

Residue 1650–1657 (GSIGIGRS) participates in ATP binding.

The protein belongs to the Ycf2 family.

It is found in the plastid. Its subcellular location is the chloroplast stroma. Functionally, probable ATPase of unknown function. Its presence in a non-photosynthetic plant (Epifagus virginiana) and experiments in tobacco indicate that it has an essential function which is probably not related to photosynthesis. In Arabis hirsuta (Hairy rock-cress), this protein is Protein Ycf2.